Here is a 1381-residue protein sequence, read N- to C-terminus: Contactin-associated protein 1 (1381 aa).

An N-terminal signal peptide occupies residues 1–20 (MMSLRLFSILLAAVVSGAQG). Residues 21 to 1284 (WGYYGCNEEL…PYYHDDGWIA (1264 aa)) lie on the Extracellular side of the membrane. Residues 26–169 (CNEELVGPLY…IGLRLGIYGC (144 aa)) enclose the F5/8 type C domain. A disulfide bridge connects residues C26 and C169. Residues N121, N129, and N277 are each glycosylated (N-linked (GlcNAc...) asparagine). Laminin G-like domains are found at residues 204–356 (FKTE…AFRC) and 390–539 (FRTW…FDTC). A disulfide bond links C324 and C356. 3 N-linked (GlcNAc...) asparagine glycosylation sites follow: N421, N500, and N519. Cystine bridges form between C507–C539, C545–C556, C550–C565, and C567–C577. The 33-residue stretch at 544-576 (RCSPNMCEHDGRCYQSWDDFICYCELTGYKGVT) folds into the EGF-like 1 domain. A Fibrinogen C-terminal domain is found at 577 to 796 (CHEPLYKESC…NTISFRTGAA (220 aa)). Residues N598, N654, N665, N764, N805, N844, N861, N949, and N957 are each glycosylated (N-linked (GlcNAc...) asparagine). In terms of domain architecture, Laminin G-like 3 spans 814-958 (FRTSAPSGVF…NASEGTFPNC (145 aa)). Cystine bridges form between C931-C958, C962-C975, C969-C984, and C986-C996. The region spanning 962–996 (CTHPRFPCFHGGRCVERYSYYTCDCDLTAFDGPYC) is the EGF-like 2 domain. Residues N1079 and N1148 are each glycosylated (N-linked (GlcNAc...) asparagine). Residues 1089-1251 (FSTSSAPAVL…VQGELSESNC (163 aa)) form the Laminin G-like 4 domain. A disulfide bond links C1210 and C1251. Residues 1285-1305 (ILLGFLVAFLLLGLVGMLVLF) traverse the membrane as a helical segment. Residues 1306-1381 (YLQNHRYKGS…PQILEESRSE (76 aa)) are Cytoplasmic-facing. Residues 1317-1381 (HTNEPKATHD…PQILEESRSE (65 aa)) form a disordered region. A compositionally biased stretch (basic and acidic residues) spans 1319–1329 (NEPKATHDSHP). An SH3-binding motif is present at residues 1329-1366 (PGGKAPLPPSGPAQAPAPTPAPTQVPTPAPAPASGPGP). A compositionally biased stretch (pro residues) spans 1334–1363 (PLPPSGPAQAPAPTPAPTQVPTPAPAPASG). Phosphoserine is present on S1380.

The protein belongs to the neurexin family. In terms of assembly, interacts with CNTN1/contactin in cis form. Predominantly expressed in brain. In myelinated nerve fibers of the CNS predominantly found in paranodal axoglial junctions. In unmyelinated nerve fibers of the CNS diffusely distributed along the entire surface. Weak expression is detected in ovary, pancreas, colon, lung, heart, intestine and testis.

It localises to the membrane. The protein resides in the cell junction. Its subcellular location is the paranodal septate junction. In terms of biological role, required, with CNTNAP2, for radial and longitudinal organization of myelinated axons. Plays a role in the formation of functional distinct domains critical for saltatory conduction of nerve impulses in myelinated nerve fibers. Demarcates the paranodal region of the axo-glial junction. In association with contactin involved in the signaling between axons and myelinating glial cells. The protein is Contactin-associated protein 1 (Cntnap1) of Rattus norvegicus (Rat).